Here is a 364-residue protein sequence, read N- to C-terminus: Adenine deaminase (364 aa).

Positions 25, 27, and 221 each coordinate Zn(2+). The Proton donor role is filled by Glu224. Residue Asp301 coordinates Zn(2+). Asp302 contacts substrate.

This sequence belongs to the metallo-dependent hydrolases superfamily. Adenosine and AMP deaminases family. Adenine deaminase type 2 subfamily. The cofactor is Zn(2+).

The protein resides in the cytoplasm. The protein localises to the nucleus. It catalyses the reaction adenine + H2O + H(+) = hypoxanthine + NH4(+). Functionally, catalyzes the hydrolytic deamination of adenine to hypoxanthine. Plays an important role in the purine salvage pathway and in nitrogen catabolism. Has no activity with adenosine as a substrate. In Emericella nidulans (strain FGSC A4 / ATCC 38163 / CBS 112.46 / NRRL 194 / M139) (Aspergillus nidulans), this protein is Adenine deaminase (aah1).